A 280-amino-acid chain; its full sequence is uncharacterized protein (280 aa).

CBS domains follow at residues 10 to 67 (QNKK…GSKY), 90 to 146 (MEEN…KIDE), 154 to 209 (ITRD…DWAF), and 229 to 280 (MKRD…KYFA).

This is an uncharacterized protein from Methanocaldococcus jannaschii (strain ATCC 43067 / DSM 2661 / JAL-1 / JCM 10045 / NBRC 100440) (Methanococcus jannaschii).